The primary structure comprises 332 residues: ADP-L-glycero-D-manno-heptose-6-epimerase (332 aa).

NADP(+) contacts are provided by residues 13–14, 34–35, lysine 41, lysine 56, 78–82, and asparagine 95; these read FI, DN, and EGACS. Tyrosine 142 acts as the Proton acceptor in catalysis. Lysine 146 serves as a coordination point for NADP(+). Asparagine 171 provides a ligand contact to substrate. Positions 172 and 180 each coordinate NADP(+). The active-site Proton acceptor is lysine 180. Residues arginine 182, histidine 189, 203–206, arginine 216, and tyrosine 295 each bind substrate; that span reads FEGC.

Belongs to the NAD(P)-dependent epimerase/dehydratase family. HldD subfamily. As to quaternary structure, homopentamer. The cofactor is NADP(+).

The enzyme catalyses ADP-D-glycero-beta-D-manno-heptose = ADP-L-glycero-beta-D-manno-heptose. Its pathway is nucleotide-sugar biosynthesis; ADP-L-glycero-beta-D-manno-heptose biosynthesis; ADP-L-glycero-beta-D-manno-heptose from D-glycero-beta-D-manno-heptose 7-phosphate: step 4/4. Catalyzes the interconversion between ADP-D-glycero-beta-D-manno-heptose and ADP-L-glycero-beta-D-manno-heptose via an epimerization at carbon 6 of the heptose. This chain is ADP-L-glycero-D-manno-heptose-6-epimerase, found in Thiobacillus denitrificans (strain ATCC 25259 / T1).